A 682-amino-acid polypeptide reads, in one-letter code: DNA-directed RNA polymerase subunit beta' (682 aa).

4 residues coordinate Zn(2+): Cys-69, Cys-71, Cys-87, and Cys-90. Residues Asp-489, Asp-491, and Asp-493 each contribute to the Mg(2+) site.

This sequence belongs to the RNA polymerase beta' chain family. RpoC1 subfamily. In plastids the minimal PEP RNA polymerase catalytic core is composed of four subunits: alpha, beta, beta', and beta''. When a (nuclear-encoded) sigma factor is associated with the core the holoenzyme is formed, which can initiate transcription. It depends on Mg(2+) as a cofactor. Zn(2+) is required as a cofactor.

Its subcellular location is the plastid. It localises to the chloroplast. It carries out the reaction RNA(n) + a ribonucleoside 5'-triphosphate = RNA(n+1) + diphosphate. DNA-dependent RNA polymerase catalyzes the transcription of DNA into RNA using the four ribonucleoside triphosphates as substrates. The chain is DNA-directed RNA polymerase subunit beta' from Vitis vinifera (Grape).